Consider the following 339-residue polypeptide: Glycerol-3-phosphate dehydrogenase [NAD(P)+] (339 aa).

The NADPH site is built by Ser-15, Tyr-16, His-36, and Lys-110. Sn-glycerol 3-phosphate-binding residues include Lys-110, Gly-139, and Thr-141. Ala-143 is a binding site for NADPH. Residues Lys-195, Asp-248, Ser-258, Arg-259, and Asn-260 each contribute to the sn-glycerol 3-phosphate site. Lys-195 functions as the Proton acceptor in the catalytic mechanism. Arg-259 serves as a coordination point for NADPH. Positions 283 and 285 each coordinate NADPH.

It belongs to the NAD-dependent glycerol-3-phosphate dehydrogenase family.

The protein resides in the cytoplasm. It catalyses the reaction sn-glycerol 3-phosphate + NAD(+) = dihydroxyacetone phosphate + NADH + H(+). It carries out the reaction sn-glycerol 3-phosphate + NADP(+) = dihydroxyacetone phosphate + NADPH + H(+). The protein operates within membrane lipid metabolism; glycerophospholipid metabolism. Catalyzes the reduction of the glycolytic intermediate dihydroxyacetone phosphate (DHAP) to sn-glycerol 3-phosphate (G3P), the key precursor for phospholipid synthesis. The sequence is that of Glycerol-3-phosphate dehydrogenase [NAD(P)+] from Salmonella agona (strain SL483).